Here is a 212-residue protein sequence, read N- to C-terminus: uncharacterized protein (212 aa).

The tract at residues 42–101 is disordered; the sequence is GITGPKATKSPSRRTTRSPSPSRRTTRSSPSRRTTRSSPSRRTTRSPSPSGRRKQGGPAV. Low complexity predominate over residues 58-91; the sequence is RSPSPSRRTTRSSPSRRTTRSSPSRRTTRSPSPS.

The protein belongs to the IIV-6 378R family.

This is an uncharacterized protein from Invertebrate iridescent virus 3 (IIV-3).